The following is a 772-amino-acid chain: Polyribonucleotide nucleotidyltransferase (772 aa).

The Mg(2+) site is built by Asp488 and Asp494. The region spanning 555 to 614 (PRLTTLKINPEKIRDVIGKGGAVIRGLQEETGTTINIDEDGTITIASTDPEKAEFAKKRI) is the KH domain. Positions 624 to 692 (GKVYEGPVTK…EKGRVKLSMK (69 aa)) constitute an S1 motif domain. The tract at residues 690-772 (SMKALTERPA…QPYAPRDSQE (83 aa)) is disordered. Residues 703–740 (YSERPPREDRGDRGDRGGERRERSDRGDRGGDRGERAP) show a composition bias toward basic and acidic residues. Positions 743-757 (NSEQQQQPRSNEQQP) are enriched in low complexity.

This sequence belongs to the polyribonucleotide nucleotidyltransferase family. Requires Mg(2+) as cofactor.

The protein localises to the cytoplasm. The catalysed reaction is RNA(n+1) + phosphate = RNA(n) + a ribonucleoside 5'-diphosphate. Functionally, involved in mRNA degradation. Catalyzes the phosphorolysis of single-stranded polyribonucleotides processively in the 3'- to 5'-direction. The chain is Polyribonucleotide nucleotidyltransferase from Variovorax paradoxus (strain S110).